The sequence spans 86 residues: uncharacterized protein (86 aa).

2 helical membrane passes run 21-43 (VFWVGLVVYYGFVALCWIGEATA) and 53-75 (FWYASFLGTFLIPLFMSIIYFYF).

It is found in the cell membrane. This is an uncharacterized protein from Archaeoglobus fulgidus (strain ATCC 49558 / DSM 4304 / JCM 9628 / NBRC 100126 / VC-16).